Reading from the N-terminus, the 956-residue chain is Probable hypoxanthine oxidase XdhD (956 aa).

Residues Gln414, Phe445, and Ala727 each contribute to the Mo-molybdopterin site.

Belongs to the xanthine dehydrogenase family. Requires [2Fe-2S] cluster as cofactor. Mo-molybdopterin is required as a cofactor.

Probably has no xanthine dehydrogenase activity; however deletion results in increased adenine sensitivity, suggesting that this protein contributes to the conversion of adenine to guanine nucleotides during purine salvage. This chain is Probable hypoxanthine oxidase XdhD (xdhD), found in Escherichia coli O157:H7.